A 338-amino-acid polypeptide reads, in one-letter code: Ketol-acid reductoisomerase (NADP(+)) (338 aa).

Positions 2-182 constitute a KARI N-terminal Rossmann domain; the sequence is TKMYYEKDTD…GGARAGVLET (181 aa). Residues 25–28, serine 51, serine 53, and 83–86 contribute to the NADP(+) site; these read YGSQ and DELQ. Histidine 108 is an active-site residue. Glycine 134 serves as a coordination point for NADP(+). The 148-residue stretch at 183–330 folds into the KARI C-terminal knotted domain; it reads TFRTETETDL…SEIRKLYCWN (148 aa). Mg(2+) is bound by residues aspartate 191, glutamate 195, glutamate 227, and glutamate 231. Substrate is bound at residue serine 252.

The protein belongs to the ketol-acid reductoisomerase family. Requires Mg(2+) as cofactor.

The enzyme catalyses (2R)-2,3-dihydroxy-3-methylbutanoate + NADP(+) = (2S)-2-acetolactate + NADPH + H(+). It carries out the reaction (2R,3R)-2,3-dihydroxy-3-methylpentanoate + NADP(+) = (S)-2-ethyl-2-hydroxy-3-oxobutanoate + NADPH + H(+). It participates in amino-acid biosynthesis; L-isoleucine biosynthesis; L-isoleucine from 2-oxobutanoate: step 2/4. It functions in the pathway amino-acid biosynthesis; L-valine biosynthesis; L-valine from pyruvate: step 2/4. In terms of biological role, involved in the biosynthesis of branched-chain amino acids (BCAA). Catalyzes an alkyl-migration followed by a ketol-acid reduction of (S)-2-acetolactate (S2AL) to yield (R)-2,3-dihydroxy-isovalerate. In the isomerase reaction, S2AL is rearranged via a Mg-dependent methyl migration to produce 3-hydroxy-3-methyl-2-ketobutyrate (HMKB). In the reductase reaction, this 2-ketoacid undergoes a metal-dependent reduction by NADPH to yield (R)-2,3-dihydroxy-isovalerate. This is Ketol-acid reductoisomerase (NADP(+)) from Clostridium botulinum (strain Alaska E43 / Type E3).